The chain runs to 153 residues: Probable trafficking protein particle complex subunit 2 (153 aa).

Belongs to the TRAPP small subunits family. Sedlin subfamily. As to quaternary structure, part of the multisubunit TRAPP (transport protein particle) complex.

The protein localises to the cytoplasm. The protein resides in the perinuclear region. It is found in the endoplasmic reticulum. Its subcellular location is the golgi apparatus. Functionally, may play a role in vesicular transport from endoplasmic reticulum to Golgi. This chain is Probable trafficking protein particle complex subunit 2, found in Nematostella vectensis (Starlet sea anemone).